A 631-amino-acid polypeptide reads, in one-letter code: Probable G-protein coupled receptor 153 (631 aa).

Topologically, residues 1-11 (MSDERRLPSSA) are extracellular. The helical transmembrane segment at 12 to 32 (VGWLACGGLSLLANAWGILSV) threads the bilayer. Residues 33–41 (GAKQKKWKP) are Cytoplasmic-facing. A helical membrane pass occupies residues 42–62 (LEFLLCTLAATHMLNVAVPIA). The Extracellular portion of the chain corresponds to 63 to 84 (TYAVVQLRRQRPDYEWNEGLCK). The chain crosses the membrane as a helical span at residues 85-105 (VFVSTFYTLTLATCFSVTSIS). Topologically, residues 106–126 (YHRMWMVRWPVNYRLSNAKKQ) are cytoplasmic. The helical transmembrane segment at 127-147 (AVHTVMGIWMVSFILSALPAV) threads the bilayer. At 148–162 (GWHDTSERFYTHGCR) the chain is on the extracellular side. A helical transmembrane segment spans residues 163 to 183 (FIVAEIGLGFGVCFLLLVGGS). Topologically, residues 184 to 243 (VAMGMVCTAIALFQTLATQVGHRADRRTFTVPTIVVEDAQGKRRSSIDGSEPARTSLQIT) are cytoplasmic. The helical transmembrane segment at 244-264 (GLVATIVVIYDCLMGFPVLVV) threads the bilayer. Residues 265–276 (SFSSLRADASAP) are Extracellular-facing. Residues 277 to 297 (WMALCVLWCSVTQALLLPLFL) form a helical membrane-spanning segment. The Cytoplasmic portion of the chain corresponds to 298–631 (WTCDRYRADL…LHSDSLGSAS (334 aa)). Disordered stretches follow at residues 486 to 518 (LQPS…RSAS), 546 to 590 (QPFP…SLSA), and 603 to 631 (CGSI…GSAS). Over residues 605–617 (SISSFLSSPSESS) the composition is skewed to low complexity.

The protein belongs to the G-protein coupled receptor 1 family.

The protein resides in the cell membrane. Orphan receptor. The sequence is that of Probable G-protein coupled receptor 153 (Gpr153) from Mus musculus (Mouse).